A 743-amino-acid chain; its full sequence is MTISNTRPITPDLIASHGLKPDEYERILNLIGREPTFTELGIFSAMWNEHCSYKSSKKWLRTLPTKGPRVIQGPGENAGVVDIDDGDCVVFKMESHNHPSYIEPYQGAATGVGGILRDVFTMGARPIAAMNALRFGSPDHPKTRHLVSGVVAGVGGYGNSFGVPTVGGEVEFDARYNGNILVNAFAAGLAKTDAIFYSKAEGVGLPVVYLGAKTGRDGVGGATMASAEFDESIEEKRPTVQVGDPFTEKCLLEACLELMQTGAVIAIQDMGAAGLTCSAVEMGAKGDLGIELDLDKVPVREERMTAYEMMLSESQERMLMVLRPEKEEEAKAIFVKWGLDFAIVGKTTDDLRFRILHQGEEVANLPIKELGDEAPEYDRPWTPAKVPSPLATNDIPQADVADTLLQLVGSANNSSRRWVYEQYDTLIQGNSLQLPGGDAGVVRVEGHEAKALAFSSDVTPRYVEADPFEGGKQAVAECWRNLTATGALPLAATDNLNFGNPERPEIMSQLVHAIKGIGEACQALDFPIVSGNVSLYNETNGQAILPTPTIGGVGLVRDWSKMARIRFAVADETILLAGAPKSWGTHIGQSVYMRDIHGRTDGPAPHVDLAHERKVGDFVRGLIGDGLVTAVHDCSSGGLALAVAEMAMASGIGATIAAPAEHDAIPVFYGEDQGRYVVTVANGAVETVAARAKAAGVALPVIGRTGGDAVKLGDARPVSVNALRSAHEAWFPNYMGGDLAPDN.

His50 is an active-site residue. ATP-binding residues include Tyr53 and Lys92. Glu94 is a binding site for Mg(2+). Substrate-binding positions include 95-98 and Arg117; that span reads SHNH. His96 functions as the Proton acceptor in the catalytic mechanism. Position 118 (Asp118) interacts with Mg(2+). Residue Gln241 coordinates substrate. Asp269 is a Mg(2+) binding site. 313–315 serves as a coordination point for substrate; the sequence is ESQ. Residues Asp494 and Gly531 each coordinate ATP. Residue Asn532 participates in Mg(2+) binding. Ser534 contributes to the substrate binding site.

The protein belongs to the FGAMS family. In terms of assembly, monomer. Part of the FGAM synthase complex composed of 1 PurL, 1 PurQ and 2 PurS subunits.

It localises to the cytoplasm. The enzyme catalyses N(2)-formyl-N(1)-(5-phospho-beta-D-ribosyl)glycinamide + L-glutamine + ATP + H2O = 2-formamido-N(1)-(5-O-phospho-beta-D-ribosyl)acetamidine + L-glutamate + ADP + phosphate + H(+). It functions in the pathway purine metabolism; IMP biosynthesis via de novo pathway; 5-amino-1-(5-phospho-D-ribosyl)imidazole from N(2)-formyl-N(1)-(5-phospho-D-ribosyl)glycinamide: step 1/2. Part of the phosphoribosylformylglycinamidine synthase complex involved in the purines biosynthetic pathway. Catalyzes the ATP-dependent conversion of formylglycinamide ribonucleotide (FGAR) and glutamine to yield formylglycinamidine ribonucleotide (FGAM) and glutamate. The FGAM synthase complex is composed of three subunits. PurQ produces an ammonia molecule by converting glutamine to glutamate. PurL transfers the ammonia molecule to FGAR to form FGAM in an ATP-dependent manner. PurS interacts with PurQ and PurL and is thought to assist in the transfer of the ammonia molecule from PurQ to PurL. This is Phosphoribosylformylglycinamidine synthase subunit PurL from Sinorhizobium medicae (strain WSM419) (Ensifer medicae).